Consider the following 300-residue polypeptide: tRNA dimethylallyltransferase (300 aa).

8 to 15 (GASASGKS) is an ATP binding site. 10–15 (SASGKS) provides a ligand contact to substrate. The tract at residues 33 to 36 (DSLS) is interaction with substrate tRNA.

It belongs to the IPP transferase family. As to quaternary structure, monomer. Mg(2+) is required as a cofactor.

It carries out the reaction adenosine(37) in tRNA + dimethylallyl diphosphate = N(6)-dimethylallyladenosine(37) in tRNA + diphosphate. Its function is as follows. Catalyzes the transfer of a dimethylallyl group onto the adenine at position 37 in tRNAs that read codons beginning with uridine, leading to the formation of N6-(dimethylallyl)adenosine (i(6)A). The sequence is that of tRNA dimethylallyltransferase from Wolinella succinogenes (strain ATCC 29543 / DSM 1740 / CCUG 13145 / JCM 31913 / LMG 7466 / NCTC 11488 / FDC 602W) (Vibrio succinogenes).